A 463-amino-acid chain; its full sequence is UDP-N-acetylmuramoylalanine--D-glutamate ligase (463 aa).

126-132 (GSNGKST) is a binding site for ATP.

It belongs to the MurCDEF family.

The protein resides in the cytoplasm. It catalyses the reaction UDP-N-acetyl-alpha-D-muramoyl-L-alanine + D-glutamate + ATP = UDP-N-acetyl-alpha-D-muramoyl-L-alanyl-D-glutamate + ADP + phosphate + H(+). Its pathway is cell wall biogenesis; peptidoglycan biosynthesis. Its function is as follows. Cell wall formation. Catalyzes the addition of glutamate to the nucleotide precursor UDP-N-acetylmuramoyl-L-alanine (UMA). The sequence is that of UDP-N-acetylmuramoylalanine--D-glutamate ligase from Idiomarina loihiensis (strain ATCC BAA-735 / DSM 15497 / L2-TR).